Reading from the N-terminus, the 478-residue chain is tRNA modification GTPase MnmE (478 aa).

Residues Arg36, Glu94, and Lys133 each coordinate (6S)-5-formyl-5,6,7,8-tetrahydrofolate. The TrmE-type G domain maps to 230-402; sequence GIHVVLAGRP…LVETLCAKVG (173 aa). A K(+)-binding site is contributed by Asn240. GTP is bound by residues 240-245, 259-265, and 284-287; these read NAGKSS, TDVAGTT, and DTAG. Ser244 is a Mg(2+) binding site. K(+)-binding residues include Thr259, Val261, and Thr264. Thr265 serves as a coordination point for Mg(2+). Residue Lys478 coordinates (6S)-5-formyl-5,6,7,8-tetrahydrofolate.

This sequence belongs to the TRAFAC class TrmE-Era-EngA-EngB-Septin-like GTPase superfamily. TrmE GTPase family. Homodimer. Heterotetramer of two MnmE and two MnmG subunits. Requires K(+) as cofactor.

It localises to the cytoplasm. Its function is as follows. Exhibits a very high intrinsic GTPase hydrolysis rate. Involved in the addition of a carboxymethylaminomethyl (cmnm) group at the wobble position (U34) of certain tRNAs, forming tRNA-cmnm(5)s(2)U34. The protein is tRNA modification GTPase MnmE of Psychrobacter cryohalolentis (strain ATCC BAA-1226 / DSM 17306 / VKM B-2378 / K5).